Here is a 210-residue protein sequence, read N- to C-terminus: Pyridoxine/pyridoxamine 5'-phosphate oxidase (210 aa).

Residues 7–10 and Lys-65 contribute to the substrate site; that span reads REDY. FMN contacts are provided by residues 60 to 65, 75 to 76, Arg-81, Lys-82, and Gln-104; these read RMVLLK and FT. Residues Tyr-122, Arg-126, and Ser-130 each coordinate substrate. Residues 139–140 and Trp-183 each bind FMN; that span reads QS. 189–191 contributes to the substrate binding site; that stretch reads RLH. Arg-193 lines the FMN pocket.

It belongs to the pyridoxamine 5'-phosphate oxidase family. Homodimer. Requires FMN as cofactor.

It catalyses the reaction pyridoxamine 5'-phosphate + O2 + H2O = pyridoxal 5'-phosphate + H2O2 + NH4(+). It carries out the reaction pyridoxine 5'-phosphate + O2 = pyridoxal 5'-phosphate + H2O2. It participates in cofactor metabolism; pyridoxal 5'-phosphate salvage; pyridoxal 5'-phosphate from pyridoxamine 5'-phosphate: step 1/1. The protein operates within cofactor metabolism; pyridoxal 5'-phosphate salvage; pyridoxal 5'-phosphate from pyridoxine 5'-phosphate: step 1/1. In terms of biological role, catalyzes the oxidation of either pyridoxine 5'-phosphate (PNP) or pyridoxamine 5'-phosphate (PMP) into pyridoxal 5'-phosphate (PLP). This chain is Pyridoxine/pyridoxamine 5'-phosphate oxidase, found in Neisseria meningitidis serogroup B (strain ATCC BAA-335 / MC58).